We begin with the raw amino-acid sequence, 217 residues long: Thiopurine S-methyltransferase (217 aa).

S-adenosyl-L-methionine contacts are provided by tryptophan 10, leucine 45, glutamate 66, and arginine 127.

The protein belongs to the class I-like SAM-binding methyltransferase superfamily. TPMT family.

The protein localises to the cytoplasm. The enzyme catalyses S-adenosyl-L-methionine + a thiopurine = S-adenosyl-L-homocysteine + a thiopurine S-methylether.. The chain is Thiopurine S-methyltransferase from Acinetobacter baylyi (strain ATCC 33305 / BD413 / ADP1).